The primary structure comprises 1173 residues: SMC5-SMC6 complex localization factor protein 2 (1173 aa).

Residues 1 to 109 are disordered; sequence MTRRCMPARP…KPKRVPPEKS (109 aa). 2 stretches are compositionally biased toward basic and acidic residues: residues 39-50 and 88-106; these read KRTESPGDRKQS and QFER…RVPP. The short motif at 137–149 is the APIM motif element; the sequence is SLASKYLAKGTNI. Disordered stretches follow at residues 161–230, 256–275, 280–373, 394–620, and 635–663; these read MKSL…PEES, QMEQ…SLSL, ERKY…QKEK, KEPS…EEET, and TPAA…VHPG. Residues 181-199 show a composition bias toward basic and acidic residues; that stretch reads ENNEKNDRDRGKTNADSKK. Low complexity-rich tracts occupy residues 212–221 and 262–275; these read SSRSLSSRSS and NSEN…SLSL. The span at 280 to 293 shows a compositional bias: basic and acidic residues; that stretch reads ERKYKPRQEQRKQN. Residues 317–330 are compositionally biased toward polar residues; the sequence is SDSWEPTSAGSKQN. Composition is skewed to basic and acidic residues over residues 339–349 and 355–373; these read NSVDSDLKSTR and KARE…QKEK. Over residues 409–428 the composition is skewed to polar residues; it reads PSNSGNSGHHSTRNSDQIQV. Ser481 carries the phosphoserine modification. Positions 499 to 520 are enriched in basic and acidic residues; the sequence is SKKDKERSSSKECSGHSTESTK. Low complexity predominate over residues 571 to 592; sequence APSDKAPSEGESSGNSNAGSSA. The segment covering 602–619 has biased composition (acidic residues); sequence DSDEESLGYNLDSDEEEE. Ser603, Ser607, and Ser614 each carry phosphoserine. The interval 635–1173 is interaction with SIMC1; sequence TPAATGKPPA…QLHDFWVPDS (539 aa). Positions 664–1166 are NSE6-like domain; sequence TYTNTLERLV…NCRPTQGQLH (503 aa). The segment at 702-1173 is required for interaction with SLF1 and RAD18; it reads PIRIGEEDST…QLHDFWVPDS (472 aa).

It belongs to the FAM178 family. Forms a heterodimer with SIMC1. Interacts with SLF1 (via N-terminus); this interaction links RAD18 to the SMC5-SMC6 complex. Interacts with RAD18; this interaction is increased in a SLF1-dependent manner. Interacts with SMC5 and SMC6. As to expression, widely expressed. Expressed at higher level in skeletal muscle and at slightly lower level in brain, liver and heart, than in lung, kidney, spleen and thymus.

The protein resides in the nucleus. It is found in the PML body. Its function is as follows. Plays a role in the DNA damage response (DDR) pathway by regulating postreplication repair of UV-damaged DNA and genomic stability maintenance. The SLF1-SLF2 complex acts to link RAD18 with the SMC5-SMC6 complex at replication-coupled interstrand cross-links (ICL) and DNA double-strand breaks (DSBs) sites on chromatin during DNA repair in response to stalled replication forks. Promotes the recruitment of the SMC5-SMC6 complex to DNA lesions. Plays a role in SMC5-SMC6 complex recruitment for viral restriction. Forms a complex with SIMC1 and this complex is required to recruit SMC5-SMC6 complex to PML nuclear bodies and sites of viral replication. The chain is SMC5-SMC6 complex localization factor protein 2 from Homo sapiens (Human).